The primary structure comprises 765 residues: Protein transport protein Sec23A (765 aa).

T2 is subject to N-acetylthreonine. Zn(2+) is bound by residues C61, C66, C85, and C88. Position 308 is a phosphothreonine (T308). A Gelsolin-like repeat occupies 632-718; that stretch reads PEPVLLDSSS…EHGGSQARFL (87 aa).

Belongs to the SEC23/SEC24 family. SEC23 subfamily. COPII is composed of at least five proteins: the Sec23/24 complex, the Sec13/31 complex and Sar1. Interacts with SEC23IP. Interacts with HTR4. Interacts with SEC16A. Interacts with SLC6A4. Interacts (as part of the Sec23/24 complex) with SEC22B; recruits SEC22B into COPII-coated vesicles and allows the transport of this cargo from the endoplasmic reticulum to the Golgi. Interacts (via Gelsolin-like repeat) with MIA2 and MIA3; specifically involved in the transport of large cargos like the collagen COL7A1. Interacts with DDHD1. Interacts with TMEM39A. Interacts with SACM1L; this interaction is reduced in the absence of TMEM39A. Interacts with kinase FAM20C; transport of FAM20C from the endoplasmic reticulum to the Golgi is likely to be mediated by COPII vesicles. As to expression, high levels in brain and fibroblasts.

It is found in the cytoplasmic vesicle. The protein resides in the COPII-coated vesicle membrane. Its subcellular location is the endoplasmic reticulum membrane. It localises to the cytoplasm. The protein localises to the cytosol. Its function is as follows. Component of the coat protein complex II (COPII) which promotes the formation of transport vesicles from the endoplasmic reticulum (ER). The coat has two main functions, the physical deformation of the endoplasmic reticulum membrane into vesicles and the selection of cargo molecules for their transport to the Golgi complex. Required for the translocation of insulin-induced glucose transporter SLC2A4/GLUT4 to the cell membrane. This Mus musculus (Mouse) protein is Protein transport protein Sec23A.